The chain runs to 360 residues: Peptide chain release factor 1 (360 aa).

At Q237 the chain carries N5-methylglutamine.

This sequence belongs to the prokaryotic/mitochondrial release factor family. Methylated by PrmC. Methylation increases the termination efficiency of RF1.

The protein resides in the cytoplasm. Its function is as follows. Peptide chain release factor 1 directs the termination of translation in response to the peptide chain termination codons UAG and UAA. This chain is Peptide chain release factor 1, found in Pseudomonas putida (strain W619).